Consider the following 568-residue polypeptide: Protein phosphatase 1 regulatory inhibitor subunit 16B (568 aa).

The stretch at 15–55 (EKVPTLERLRAAQKRRAQQLKKWAQYEQDLLHRKRKHERKR) forms a coiled coil. A Phosphoserine modification is found at serine 69. 4 ANK repeats span residues 100 to 129 (DGLT…NVNA), 133 to 162 (ELWT…DLLA), 228 to 257 (QGAT…RVDV), and 261 to 290 (DGWE…SLSA). Serine 333, serine 337, and serine 350 each carry phosphoserine. A disordered region spans residues 373–403 (SAAEDQRTSTYNGDIRETRTDQENKDPNPRL). Over residues 386–403 (DIRETRTDQENKDPNPRL) the composition is skewed to basic and acidic residues. Serine 477 carries the phosphoserine modification. The span at 505 to 517 (SSVARSGESSSEG) shows a compositional bias: low complexity. Residues 505–527 (SSVARSGESSSEGKAPLIGGRTS) form a disordered region. The ANK 5 repeat unit spans residues 531–560 (SNGTSVYYTVTSGDPPLLKFKAPMEEMEEK). Residue cysteine 564 is the site of S-palmitoyl cysteine attachment. At cysteine 565 the chain carries Cysteine methyl ester. Cysteine 565 carries the S-farnesyl cysteine lipid modification. A propeptide spans 566–568 (RIS) (removed in mature form).

As to quaternary structure, interacts with PPP1CA, PPP1CB and MSN. Interacts (via its fourth ankyrin repeat) with the mature dimeric form of RPSA/LAMR1. Interacts with EEF1A1. Interacts with PTEN. Interacts with ECE1. Phosphorylated by PKA and, after PKA priming, by GSK3B. Phosphorylation by GSK3B reduces its association with PP1C and enhances PP1C activity. Dephosphorylation by its associated PP1C results in enhanced association with PP1C, but reduced PP1C activity.

It is found in the cell membrane. It localises to the nucleus. Its subcellular location is the cell projection. Functionally, regulator of protein phosphatase 1 (PP1) that acts as a positive regulator of pulmonary endothelial cell (EC) barrier function. Protects the endothelial barrier from lipopolysaccharide (LPS)-induced vascular leakage. Involved in the regulation of the PI3K/AKT signaling pathway. Involved in the regulation of angiogenesis and endothelial cell proliferation through the control of ECE1 dephosphorylation, trafficking and activity. Involved in the regulation of endothelial cell filopodia extension. May be a downstream target for TGF-beta1 signaling cascade in endothelial cells. Involved in PKA-mediated moesin dephosphorylation which is important in EC barrier protection against thrombin stimulation. Promotes the interaction of PPP1CA with RPSA/LAMR1 and in turn facilitates the dephosphorylation of RPSA/LAMR1. Involved in the dephosphorylation of EEF1A1. The chain is Protein phosphatase 1 regulatory inhibitor subunit 16B (Ppp1r16b) from Mus musculus (Mouse).